Consider the following 271-residue polypeptide: Tryptophan synthase alpha chain (271 aa).

Residues Glu-56 and Asp-67 each act as proton acceptor in the active site.

Belongs to the TrpA family. Tetramer of two alpha and two beta chains.

The catalysed reaction is (1S,2R)-1-C-(indol-3-yl)glycerol 3-phosphate + L-serine = D-glyceraldehyde 3-phosphate + L-tryptophan + H2O. Its pathway is amino-acid biosynthesis; L-tryptophan biosynthesis; L-tryptophan from chorismate: step 5/5. Its function is as follows. The alpha subunit is responsible for the aldol cleavage of indoleglycerol phosphate to indole and glyceraldehyde 3-phosphate. The polypeptide is Tryptophan synthase alpha chain (Mycolicibacterium paratuberculosis (strain ATCC BAA-968 / K-10) (Mycobacterium paratuberculosis)).